We begin with the raw amino-acid sequence, 124 residues long: Nucleoid-associated protein Noca_0318 (124 aa).

It belongs to the YbaB/EbfC family. Homodimer.

Its subcellular location is the cytoplasm. The protein resides in the nucleoid. In terms of biological role, binds to DNA and alters its conformation. May be involved in regulation of gene expression, nucleoid organization and DNA protection. The sequence is that of Nucleoid-associated protein Noca_0318 from Nocardioides sp. (strain ATCC BAA-499 / JS614).